Consider the following 149-residue polypeptide: FAD synthase (149 aa).

ATP contacts are provided by residues 9–10, 14–17, aspartate 93, and tyrosine 120; these read VF and HPGH.

This sequence belongs to the archaeal FAD synthase family. Homodimer. Requires a divalent metal cation as cofactor.

The catalysed reaction is FMN + ATP + H(+) = FAD + diphosphate. It functions in the pathway cofactor biosynthesis; FAD biosynthesis; FAD from FMN: step 1/1. Its function is as follows. Catalyzes the transfer of the AMP portion of ATP to flavin mononucleotide (FMN) to produce flavin adenine dinucleotide (FAD) coenzyme. The polypeptide is FAD synthase (Aciduliprofundum boonei (strain DSM 19572 / T469)).